The chain runs to 244 residues: Protein A47 (244 aa).

The protein belongs to the orthopoxvirus A47 protein family.

The polypeptide is Protein A47 (Variola virus).